The chain runs to 660 residues: Bifunctional polymyxin resistance protein ArnA (660 aa).

The interval 1–304 (MKTVVFAYHD…TLGLVQGSRL (304 aa)) is formyltransferase ArnAFT. 86–88 (HLI) contacts (6R)-10-formyltetrahydrofolate. His104 functions as the Proton donor; for formyltransferase activity in the catalytic mechanism. (6R)-10-formyltetrahydrofolate contacts are provided by residues Arg114 and 136 to 140 (VKRAD). The tract at residues 314-660 (RRTRVLILGV…RTVDLTDKPS (347 aa)) is dehydrogenase ArnADH. NAD(+)-binding positions include Asp347 and 368-369 (DI). UDP-alpha-D-glucuronate is bound by residues Ala393, Tyr398, and 432–433 (TS). Residue Glu434 is the Proton acceptor; for decarboxylase activity of the active site. Residues Arg460, Asn492, 526 to 535 (KLIDGGKQKR), and Tyr613 contribute to the UDP-alpha-D-glucuronate site. The active-site Proton donor; for decarboxylase activity is the Arg619.

In the N-terminal section; belongs to the Fmt family. UDP-L-Ara4N formyltransferase subfamily. It in the C-terminal section; belongs to the NAD(P)-dependent epimerase/dehydratase family. UDP-glucuronic acid decarboxylase subfamily. Homohexamer, formed by a dimer of trimers.

It carries out the reaction UDP-alpha-D-glucuronate + NAD(+) = UDP-beta-L-threo-pentopyranos-4-ulose + CO2 + NADH. It catalyses the reaction UDP-4-amino-4-deoxy-beta-L-arabinose + (6R)-10-formyltetrahydrofolate = UDP-4-deoxy-4-formamido-beta-L-arabinose + (6S)-5,6,7,8-tetrahydrofolate + H(+). It participates in nucleotide-sugar biosynthesis; UDP-4-deoxy-4-formamido-beta-L-arabinose biosynthesis; UDP-4-deoxy-4-formamido-beta-L-arabinose from UDP-alpha-D-glucuronate: step 1/3. Its pathway is nucleotide-sugar biosynthesis; UDP-4-deoxy-4-formamido-beta-L-arabinose biosynthesis; UDP-4-deoxy-4-formamido-beta-L-arabinose from UDP-alpha-D-glucuronate: step 3/3. The protein operates within bacterial outer membrane biogenesis; lipopolysaccharide biosynthesis. Bifunctional enzyme that catalyzes the oxidative decarboxylation of UDP-glucuronic acid (UDP-GlcUA) to UDP-4-keto-arabinose (UDP-Ara4O) and the addition of a formyl group to UDP-4-amino-4-deoxy-L-arabinose (UDP-L-Ara4N) to form UDP-L-4-formamido-arabinose (UDP-L-Ara4FN). The modified arabinose is attached to lipid A and is required for resistance to polymyxin and cationic antimicrobial peptides. The polypeptide is Bifunctional polymyxin resistance protein ArnA (Escherichia coli (strain SMS-3-5 / SECEC)).